The chain runs to 160 residues: Cytochrome c-type biogenesis protein CcmE (160 aa).

Residues 1-8 lie on the Cytoplasmic side of the membrane; sequence MSAPRKTR. A helical; Signal-anchor for type II membrane protein membrane pass occupies residues 9–29; that stretch reads LYAILAVICGAVLTVALTLYA. The Periplasmic portion of the chain corresponds to 30–160; sequence LSSNIDLFYT…PAAVTEGKRL (131 aa). 2 residues coordinate heme: His130 and Tyr134.

Belongs to the CcmE/CycJ family.

The protein localises to the cell inner membrane. In terms of biological role, heme chaperone required for the biogenesis of c-type cytochromes. Transiently binds heme delivered by CcmC and transfers the heme to apo-cytochromes in a process facilitated by CcmF and CcmH. The protein is Cytochrome c-type biogenesis protein CcmE of Pectobacterium carotovorum subsp. carotovorum (strain PC1).